Reading from the N-terminus, the 149-residue chain is Large ribosomal subunit protein eL19 (149 aa).

A disordered region spans residues 45–94 (VADGTIDAEDTQGNSRGRARERDAKESYGHKKGAGSRKGKAGARQNEKRE). The span at 62–73 (RARERDAKESYG) shows a compositional bias: basic and acidic residues. Basic residues predominate over residues 74–85 (HKKGAGSRKGKA).

Belongs to the eukaryotic ribosomal protein eL19 family. As to quaternary structure, part of the 50S ribosomal subunit.

Its function is as follows. Binds to the 23S rRNA. This Halobacterium salinarum (strain ATCC 700922 / JCM 11081 / NRC-1) (Halobacterium halobium) protein is Large ribosomal subunit protein eL19.